Consider the following 599-residue polypeptide: DNA primase (599 aa).

The CHC2-type zinc finger occupies 38 to 62; the sequence is CPFHQEKTPSFTVSDSKRFFYCFGC. The Toprim domain maps to 250-332; the sequence is NYSILVEGYF…EKKISFIRLP (83 aa). Mg(2+)-binding residues include glutamate 256, aspartate 300, and aspartate 302.

The protein belongs to the DnaG primase family. Monomer. Interacts with DnaB. The cofactor is Zn(2+). Mg(2+) is required as a cofactor.

The catalysed reaction is ssDNA + n NTP = ssDNA/pppN(pN)n-1 hybrid + (n-1) diphosphate.. RNA polymerase that catalyzes the synthesis of short RNA molecules used as primers for DNA polymerase during DNA replication. The protein is DNA primase of Rickettsia bellii (strain RML369-C).